The sequence spans 247 residues: 2,3-bisphosphoglycerate-dependent phosphoglycerate mutase (247 aa).

Substrate contacts are provided by residues 8–15 (RHGESQWN), 21–22 (TG), Arg-60, 87–90 (ERHY), Lys-98, 114–115 (RR), and 183–184 (GN). His-9 acts as the Tele-phosphohistidine intermediate in catalysis. Glu-87 acts as the Proton donor/acceptor in catalysis.

This sequence belongs to the phosphoglycerate mutase family. BPG-dependent PGAM subfamily.

It carries out the reaction (2R)-2-phosphoglycerate = (2R)-3-phosphoglycerate. It participates in carbohydrate degradation; glycolysis; pyruvate from D-glyceraldehyde 3-phosphate: step 3/5. In terms of biological role, catalyzes the interconversion of 2-phosphoglycerate and 3-phosphoglycerate. This Chlorobaculum tepidum (strain ATCC 49652 / DSM 12025 / NBRC 103806 / TLS) (Chlorobium tepidum) protein is 2,3-bisphosphoglycerate-dependent phosphoglycerate mutase.